The primary structure comprises 520 residues: MAFLDNPLIILAHIRQSHVTSDDTGMCEMVLIDHDVDLEKLYQSSVSGENSTQMQSNGGETQGYVYSQSVDITSSWDFGIRRRSNTAQKLERLRKERQNQIKCKNVQWKDRNTSHSAEELSSLFERKNFKERALNQGKQSILSVRLEQCPLQLNNPFNEYSKFDGKGHVGTTATKKIDVYLSMQTSQDKLLPMTVVTIANAKVHDLIGLICWQYTTEGREPKLNDNVDAFCLHIAEDDGEVDTDFPPLDSNEPIHKFGFSTLALVEKYSSPGLAAKQSLFVRINAAHGFSLIQVDSTNVTMRDILEKALKRRKGSQRNSGPQYRLEKQSQPNVPVDLDSTLENQNSLEFCLVRENSSRGEEPPEEETQIDIATVQDMLSSHQYKSFKVSMIHRLRFTTDVQLGISGEKVEIDPVTNQKTSTKFWIKQKPISIDSDVLCACDLAEEKSPSHAMFKVTYLSNHDYKHLYFESDAATVNEIVLKVNYILESRASTARADYFAQKQRKLTRRTSFSFQKEKKPG.

One can recognise a CRIM domain in the interval 139–267; that stretch reads QSILSVRLEQ…GFSTLALVEK (129 aa). The SIN1-type RBD stretch occupies residues 279–353; it reads LFVRINAAHG…QNSLEFCLVR (75 aa). Residues 310 to 333 are disordered; it reads KRRKGSQRNSGPQYRLEKQSQPNV. Positions 382–487 constitute an SIN1-type PH domain; the sequence is QYKSFKVSMI…IVLKVNYILE (106 aa). The a 1,2-diacyl-sn-glycero-3-phospho-(1D-myo-inositol-3,4,5-trisphosphate) site is built by R393, K428, and K464.

It belongs to the SIN1 family. Component of the mechanistic target of rapamycin complex 2 (mTORC2), consisting in two heterotretramers composed of MTOR, MLST8, RICTOR and MAPKAP1/SIN1. Contrary to mTORC1, mTORC2 does not bind to and is not sensitive to FKBP12-rapamycin.

Its subcellular location is the cell membrane. It localises to the endoplasmic reticulum membrane. The protein localises to the early endosome membrane. The protein resides in the late endosome membrane. It is found in the lysosome membrane. Its subcellular location is the golgi apparatus membrane. It localises to the mitochondrion outer membrane. The protein localises to the cytoplasm. The protein resides in the perinuclear region. It is found in the nucleus. Phosphatidylinositol 3,4,5-trisphosphate (PI(3,4,5)P3) promotes MTOR activation by relieving MAPKAP1/SIN1-mediated inhibition of MTOR that takes place in absence of PI(3,4,5)P3. Component of the mechanistic target of rapamycin complex 2 (mTORC2), which transduces signals from growth factors to pathways involved in proliferation, cytoskeletal organization, lipogenesis and anabolic output. In response to growth factors, mTORC2 phosphorylates and activates AGC protein kinase family members, including AKT (AKT1, AKT2 and AKT3), PKC (PRKCA, PRKCB and PRKCE) and SGK1. In contrast to mTORC1, mTORC2 is nutrient-insensitive. Within the mTORC2 complex, MAPKAP1/SIN1 acts as a substrate adapter which recognizes and binds AGC protein kinase family members for phosphorylation by MTOR. This is Target of rapamycin complex 2 subunit MAPKAP1 (mapkap1) from Xenopus tropicalis (Western clawed frog).